The chain runs to 389 residues: NADH-quinone oxidoreductase subunit D (389 aa).

It belongs to the complex I 49 kDa subunit family. In terms of assembly, NDH-1 is composed of 14 different subunits. Subunits NuoB, C, D, E, F, and G constitute the peripheral sector of the complex.

The protein localises to the cell inner membrane. The enzyme catalyses a quinone + NADH + 5 H(+)(in) = a quinol + NAD(+) + 4 H(+)(out). NDH-1 shuttles electrons from NADH, via FMN and iron-sulfur (Fe-S) centers, to quinones in the respiratory chain. The immediate electron acceptor for the enzyme in this species is believed to be ubiquinone. Couples the redox reaction to proton translocation (for every two electrons transferred, four hydrogen ions are translocated across the cytoplasmic membrane), and thus conserves the redox energy in a proton gradient. This Citrifermentans bemidjiense (strain ATCC BAA-1014 / DSM 16622 / JCM 12645 / Bem) (Geobacter bemidjiensis) protein is NADH-quinone oxidoreductase subunit D.